The chain runs to 944 residues: Isoleucine--tRNA ligase (944 aa).

A 'HIGH' region motif is present at residues 58 to 68 (PYANGSIHIGH). Glu-563 serves as a coordination point for L-isoleucyl-5'-AMP. Positions 604–608 (KMSKS) match the 'KMSKS' region motif. Lys-607 contributes to the ATP binding site. Residues Cys-907, Cys-910, Cys-927, and Cys-930 each contribute to the Zn(2+) site.

The protein belongs to the class-I aminoacyl-tRNA synthetase family. IleS type 1 subfamily. In terms of assembly, monomer. The cofactor is Zn(2+).

It is found in the cytoplasm. The enzyme catalyses tRNA(Ile) + L-isoleucine + ATP = L-isoleucyl-tRNA(Ile) + AMP + diphosphate. Its function is as follows. Catalyzes the attachment of isoleucine to tRNA(Ile). As IleRS can inadvertently accommodate and process structurally similar amino acids such as valine, to avoid such errors it has two additional distinct tRNA(Ile)-dependent editing activities. One activity is designated as 'pretransfer' editing and involves the hydrolysis of activated Val-AMP. The other activity is designated 'posttransfer' editing and involves deacylation of mischarged Val-tRNA(Ile). The protein is Isoleucine--tRNA ligase of Salmonella typhi.